The primary structure comprises 102 residues: Cytochrome b (102 aa).

Transmembrane regions (helical) follow at residues 1-21 (FGSL…FLAM), 45-66 (WLIR…YMHI), and 81-101 (WNIG…GYVF). Heme b contacts are provided by His-51 and His-65.

This sequence belongs to the cytochrome b family. In terms of assembly, the cytochrome bc1 complex contains 3 respiratory subunits (MT-CYB, CYC1 and UQCRFS1), 2 core proteins (UQCRC1 and UQCRC2) and probably 6 low-molecular weight proteins. Heme b serves as cofactor.

Its subcellular location is the mitochondrion inner membrane. Its function is as follows. Component of the ubiquinol-cytochrome c reductase complex (complex III or cytochrome b-c1 complex) that is part of the mitochondrial respiratory chain. The b-c1 complex mediates electron transfer from ubiquinol to cytochrome c. Contributes to the generation of a proton gradient across the mitochondrial membrane that is then used for ATP synthesis. This Plethodon yonahlossee (Yonahlossee salamander) protein is Cytochrome b (mt-cyb).